A 325-amino-acid polypeptide reads, in one-letter code: Glutaminase (325 aa).

The substrate site is built by Ser-76, Asn-125, Glu-169, Asn-176, Tyr-200, Tyr-252, and Val-270.

The protein belongs to the glutaminase family. Homotetramer.

It catalyses the reaction L-glutamine + H2O = L-glutamate + NH4(+). This Clavibacter michiganensis subsp. michiganensis (strain NCPPB 382) protein is Glutaminase.